Consider the following 115-residue polypeptide: Nucleoid-associated protein Npun_F0448 (115 aa).

This sequence belongs to the YbaB/EbfC family. Homodimer.

The protein resides in the cytoplasm. Its subcellular location is the nucleoid. In terms of biological role, binds to DNA and alters its conformation. May be involved in regulation of gene expression, nucleoid organization and DNA protection. This Nostoc punctiforme (strain ATCC 29133 / PCC 73102) protein is Nucleoid-associated protein Npun_F0448.